The primary structure comprises 736 residues: Catalase-peroxidase (736 aa).

Positions 1 to 21 (MFKKTILSFVISAVMVTAASA) are cleaved as a signal peptide. The segment at residues 102–224 (WHAAGTYRTH…LAAVEMGLIY (123 aa)) is a cross-link (tryptophyl-tyrosyl-methioninium (Trp-Tyr) (with M-250)). Histidine 103 (proton acceptor) is an active-site residue. The tryptophyl-tyrosyl-methioninium (Tyr-Met) (with W-102) cross-link spans 224–250 (YVNPVGPHGNPDPLLAANDIRMSFGRM). Histidine 265 is a binding site for heme b.

Belongs to the peroxidase family. Peroxidase/catalase subfamily. Homodimer or homotetramer. Requires heme b as cofactor. In terms of processing, formation of the three residue Trp-Tyr-Met cross-link is important for the catalase, but not the peroxidase activity of the enzyme.

The catalysed reaction is H2O2 + AH2 = A + 2 H2O. It catalyses the reaction 2 H2O2 = O2 + 2 H2O. Functionally, bifunctional enzyme with both catalase and broad-spectrum peroxidase activity. The polypeptide is Catalase-peroxidase (Shewanella woodyi (strain ATCC 51908 / MS32)).